A 238-amino-acid chain; its full sequence is Fatty acid metabolism regulator protein (238 aa).

The HTH gntR-type domain maps to 6–74; it reads KGPASFAEKY…HGKPTRVNNF (69 aa). The H-T-H motif DNA-binding region spans 34–53; the sequence is ERELSELIGVTRTTLREVLQ.

In terms of assembly, homodimer.

Its subcellular location is the cytoplasm. Functionally, multifunctional regulator of fatty acid metabolism. In Shewanella baltica (strain OS185), this protein is Fatty acid metabolism regulator protein.